The sequence spans 393 residues: Lysine/ornithine decarboxylase (393 aa).

The residue at position 51 (Lys-51) is an N6-(pyridoxal phosphate)lysine. Cys-323 functions as the Proton donor; shared with dimeric partner in the catalytic mechanism.

It belongs to the Orn/Lys/Arg decarboxylase class-II family. In terms of assembly, homodimer. The cofactor is pyridoxal 5'-phosphate.

The catalysed reaction is L-lysine + H(+) = cadaverine + CO2. The enzyme catalyses L-ornithine + H(+) = putrescine + CO2. It participates in amine and polyamine biosynthesis; putrescine biosynthesis via L-ornithine pathway; putrescine from L-ornithine: step 1/1. Its activity is regulated as follows. Inhibited competitively by both alpha-difluoromethyllysine and alpha-difluoromethylornithine. Decarboxylates both L-lysine and L-ornithine with similar catalytic efficiency. The polypeptide is Lysine/ornithine decarboxylase (ldc) (Selenomonas ruminantium).